Consider the following 225-residue polypeptide: Biosynthetic peptidoglycan transglycosylase (225 aa).

A helical transmembrane segment spans residues 12–32 (IWFVAWRFLLLFVIVLFLFRF).

Belongs to the glycosyltransferase 51 family.

Its subcellular location is the cell inner membrane. It carries out the reaction [GlcNAc-(1-&gt;4)-Mur2Ac(oyl-L-Ala-gamma-D-Glu-L-Lys-D-Ala-D-Ala)](n)-di-trans,octa-cis-undecaprenyl diphosphate + beta-D-GlcNAc-(1-&gt;4)-Mur2Ac(oyl-L-Ala-gamma-D-Glu-L-Lys-D-Ala-D-Ala)-di-trans,octa-cis-undecaprenyl diphosphate = [GlcNAc-(1-&gt;4)-Mur2Ac(oyl-L-Ala-gamma-D-Glu-L-Lys-D-Ala-D-Ala)](n+1)-di-trans,octa-cis-undecaprenyl diphosphate + di-trans,octa-cis-undecaprenyl diphosphate + H(+). It functions in the pathway cell wall biogenesis; peptidoglycan biosynthesis. Peptidoglycan polymerase that catalyzes glycan chain elongation from lipid-linked precursors. This Marinomonas sp. (strain MWYL1) protein is Biosynthetic peptidoglycan transglycosylase.